The chain runs to 222 residues: Protein-L-isoaspartate O-methyltransferase (222 aa).

Ser-67 is an active-site residue.

Belongs to the methyltransferase superfamily. L-isoaspartyl/D-aspartyl protein methyltransferase family.

Its subcellular location is the cytoplasm. The enzyme catalyses [protein]-L-isoaspartate + S-adenosyl-L-methionine = [protein]-L-isoaspartate alpha-methyl ester + S-adenosyl-L-homocysteine. Functionally, catalyzes the methyl esterification of L-isoaspartyl residues in peptides and proteins that result from spontaneous decomposition of normal L-aspartyl and L-asparaginyl residues. It plays a role in the repair and/or degradation of damaged proteins. In Parvibaculum lavamentivorans (strain DS-1 / DSM 13023 / NCIMB 13966), this protein is Protein-L-isoaspartate O-methyltransferase.